We begin with the raw amino-acid sequence, 283 residues long: Non-selective voltage-gated ion channel VDAC3 (283 aa).

Residue cysteine 2 is modified to N-acetylcysteine. Phosphothreonine is present on threonine 4. An N6-acetyllysine mark is found at lysine 12, lysine 15, and lysine 20. The next 2 beta stranded transmembrane spans lie at 26-35 (MVKIDLRTKS) and 39-47 (VEFSTSGHA). Lysine 53 is covalently cross-linked (Glycyl lysine isopeptide (Lys-Gly) (interchain with G-Cter in ubiquitin)). Beta stranded transmembrane passes span 54–64 (ASGNLETKYKI), 69–76 (LTFTQKWN), and 80–89 (TLGTEISLEN). Lysine 90 carries the N6-acetyllysine modification. The chain crosses the membrane as a beta stranded span at residues 95 to 104 (LKLTLDTIFV). Residues lysine 109 and lysine 110 each participate in a glycyl lysine isopeptide (Lys-Gly) (interchain with G-Cter in ubiquitin) cross-link. Beta stranded transmembrane passes span 111-120 (SGKLKASYKR), 123-130 (FSIGSNVD), 137-145 (TIYGWAVLA), 150-158 (LAGYQMSFD), 163-175 (KLSQ…GYKA), 178-185 (FQLHTHVN), 189-198 (EFGGSIYQKV), 202-211 (IETSINLAWT), 218-227 (RFGIAAKYKL), and 231-238 (TSLSAKVN). Serine 241 bears the Phosphoserine mark. NAD(+) contacts are provided by residues 242–244 (LIG) and 260–264 (SALID). A run of 2 beta stranded transmembrane segments spans residues 242 to 251 (LIGLGYTQTL) and 254 to 263 (GVKLTLSALI). An N6-acetyllysine; alternate modification is found at lysine 266. Lysine 266 participates in a covalent cross-link: Glycyl lysine isopeptide (Lys-Gly) (interchain with G-Cter in ubiquitin); alternate. A beta stranded transmembrane segment spans residues 273–282 (HKVGLGFELE).

It belongs to the eukaryotic mitochondrial porin family. Interacts with ARMC12 in a TBC1D21-dependent manner. Interacts with MISFA. In terms of processing, ubiquitinated by PRKN during mitophagy, leading to its degradation and enhancement of mitophagy. Deubiquitinated by USP30.

Its subcellular location is the mitochondrion outer membrane. The protein localises to the membrane. The catalysed reaction is chloride(in) = chloride(out). The enzyme catalyses K(+)(in) = K(+)(out). Its function is as follows. Non-selective voltage-gated ion channel that mediates the transport of anions and cations through the mitochondrion outer membrane and plasma membrane. Forms a high-conducting channel with a stable open state and a voltage-induced closure with a mild preference for anions over cations. Involved in male fertility and sperm mitochondrial sheath formation. This chain is Non-selective voltage-gated ion channel VDAC3, found in Sus scrofa (Pig).